The sequence spans 145 residues: MAISPGPLFLIFVLGLVVIPPTLAQDDSRYTKFLTQHHDAKPKGRDDRYCERMMKRRSLTSPCKDVNTFIHGNKSNIKAICGANGSPYRENLRMSKSPFQVTTCKHTGGSPRPPCQYRASAGFRHVVIACENGLPVHFDESFFSL.

Positions 1–24 are cleaved as a signal peptide; that stretch reads MAISPGPLFLIFVLGLVVIPPTLA. At Gln-25 the chain carries Pyrrolidone carboxylic acid. The active-site Proton acceptor is the His-37. 2 residues coordinate tRNA: Arg-45 and Asp-46. Intrachain disulfides connect Cys-50/Cys-104, Cys-63/Cys-115, and Cys-81/Cys-130. Positions 55–59 match the Nucleolar localization signal motif; sequence KRRSL. The tRNA site is built by Cys-104 and Val-126. His-137 serves as the catalytic Proton donor.

This sequence belongs to the pancreatic ribonuclease family. As to quaternary structure, homodimer. Interacts with RNH1; inhibiting ANG ribonuclease activity. Interacts with PCNA.

The protein localises to the secreted. It localises to the nucleus. The protein resides in the nucleolus. It is found in the cytoplasm. Its subcellular location is the stress granule. With respect to regulation, has weak tRNA ribonuclease activity by itself due to partial autoinhibition by its C-terminus (residues 139-145), which folds into a short alpha-helix that partially occludes the substrate-binding site. In absence of stress, the ribonuclease activity is inhibited by RNH1 in the cytoplasm. In response to stress, dissociates from RNH1 in the cytoplasm and associates with cytoplasmic ribosomes with vacant A-sites: ribosomes directly activate the tRNA ribonuclease activity of ANG by refolding the C-terminal alpha-helix. In response to stress, the angiogenic activity of ANG is inhibited by RNH1 in the nucleus. Its function is as follows. Secreted ribonuclease that can either promote or restrict cell proliferation of target cells, depending on the context. Endocytosed in target cells via its receptor PLXNB2 and translocates to the cytoplasm or nucleus. Under stress conditions, localizes to the cytoplasm and promotes the assembly of stress granules (SGs): specifically cleaves a subset of tRNAs within anticodon loops to produce tRNA-derived stress-induced fragments (tiRNAs), resulting in translation repression and inhibition of cell proliferation. tiRNas also prevent formation of apoptosome, thereby promoting cell survival. Preferentially cleaves RNAs between a pyrimidine and an adenosine residue, suggesting that it cleaves the anticodon loop of tRNA(Ala) (32-UUAGCAU-38) after positions 33 and 36. Cleaves a subset of tRNAs, including tRNA(Ala), tRNA(Glu), tRNA(Gly), tRNA(Lys), tRNA(Val), tRNA(His), tRNA(Asp) and tRNA(Sec). Under growth conditions and in differentiated cells, translocates to the nucleus and stimulates ribosomal RNA (rRNA) transcription, including that containing the initiation site sequences of 45S rRNA, thereby promoting cell growth and proliferation. Angiogenin induces vascularization of normal and malignant tissues via its ability to promote rRNA transcription. Involved in hematopoietic stem and progenitor cell (HSPC) growth and survival by promoting rRNA transcription in growth conditions and inhibiting translation in response to stress, respectively. Mediates the crosstalk between myeloid and intestinal epithelial cells to protect the intestinal epithelial barrier integrity: secreted by myeloid cells and promotes intestinal epithelial cells proliferation and survival. Also mediates osteoclast-endothelial cell crosstalk in growing bone: produced by osteoclasts and protects the neighboring vascular cells against senescence by promoting rRNA transcription. This is Angiogenin from Mus musculus (Mouse).